Reading from the N-terminus, the 167-residue chain is Phosphopantetheine adenylyltransferase (167 aa).

Thr-9 serves as a coordination point for substrate. Residues 9-10 (TF) and His-17 contribute to the ATP site. Lys-41, Leu-73, and Arg-87 together coordinate substrate. ATP-binding positions include 88–90 (GLR), Glu-98, and 123–129 (YQFISGT).

This sequence belongs to the bacterial CoaD family. As to quaternary structure, homohexamer. Mg(2+) is required as a cofactor.

Its subcellular location is the cytoplasm. It carries out the reaction (R)-4'-phosphopantetheine + ATP + H(+) = 3'-dephospho-CoA + diphosphate. It participates in cofactor biosynthesis; coenzyme A biosynthesis; CoA from (R)-pantothenate: step 4/5. Reversibly transfers an adenylyl group from ATP to 4'-phosphopantetheine, yielding dephospho-CoA (dPCoA) and pyrophosphate. This Bordetella avium (strain 197N) protein is Phosphopantetheine adenylyltransferase.